The following is a 512-amino-acid chain: Kelch repeat protein C2 (512 aa).

The BTB domain maps to glutamate 2–isoleucine 67. Kelch repeat units lie at residues isoleucine 216–cysteine 261, leucine 262–glycine 307, leucine 309–aspartate 354, isoleucine 356–glycine 403, isoleucine 405–aspartate 449, and leucine 452–serine 498.

The protein belongs to the poxviruses Kelch family.

This is Kelch repeat protein C2 from Homo sapiens (Human).